The chain runs to 207 residues: Histone H1-like protein HC2 (207 aa).

Basic residues-rich tracts occupy residues 1–50 (MLGV…KTVA) and 59–72 (PAAK…APVR). The segment at 1–72 (MLGVQKKRST…KTAAKKAPVR (72 aa)) is disordered. 3 consecutive repeat copies span residues 35–58 (VRKV…AARK), 71–94 (VRKV…AARK), and 113–136 (VRKV…AARK). Residues 35–136 (VRKVAAKKTV…VAKKAVAARK (102 aa)) form a 3 X 24 AA repeats of V-R-K-V-A-A-K-K-T-V-A-R-K-T-V-A-K-K-A-V-A-A-R-K region.

Belongs to the histone H1/H5 family. HCT subfamily.

Functionally, might have a role in establishing the nucleoid structure of elementary bodies. The chain is Histone H1-like protein HC2 (hctB) from Chlamydia muridarum (strain MoPn / Nigg).